The following is a 161-amino-acid chain: Cyclic pyranopterin monophosphate synthase (161 aa).

Substrate is bound by residues 75-77 (LCH) and 113-114 (ME). Asp128 is an active-site residue.

The protein belongs to the MoaC family. Homohexamer; trimer of dimers.

The enzyme catalyses (8S)-3',8-cyclo-7,8-dihydroguanosine 5'-triphosphate = cyclic pyranopterin phosphate + diphosphate. It functions in the pathway cofactor biosynthesis; molybdopterin biosynthesis. Functionally, catalyzes the conversion of (8S)-3',8-cyclo-7,8-dihydroguanosine 5'-triphosphate to cyclic pyranopterin monophosphate (cPMP). In Salmonella heidelberg (strain SL476), this protein is Cyclic pyranopterin monophosphate synthase.